The primary structure comprises 338 residues: Ferredoxin--NADP reductase (338 aa).

FAD-binding residues include Asp36, Gln44, Tyr49, Val89, Phe123, Asp290, and Thr331.

It belongs to the ferredoxin--NADP reductase type 2 family. As to quaternary structure, homodimer. The cofactor is FAD.

The catalysed reaction is 2 reduced [2Fe-2S]-[ferredoxin] + NADP(+) + H(+) = 2 oxidized [2Fe-2S]-[ferredoxin] + NADPH. This chain is Ferredoxin--NADP reductase, found in Anaplasma phagocytophilum (strain HZ).